A 55-amino-acid polypeptide reads, in one-letter code: Large ribosomal subunit protein bL33B (55 aa).

It belongs to the bacterial ribosomal protein bL33 family.

The polypeptide is Large ribosomal subunit protein bL33B (Rhodococcus jostii (strain RHA1)).